The chain runs to 136 residues: Lipoprotein YghG (136 aa).

The N-terminal stretch at M1–G24 is a signal peptide. C25 carries the N-palmitoyl cysteine lipid modification. C25 is lipidated: S-diacylglycerol cysteine.

The protein belongs to the GspS/AspS pilotin family.

It is found in the cell outer membrane. Involved in a type II secretion system (T2SS, formerly general secretion pathway, GSP) for the export of folded proteins across the outer membrane. In a functional T2SS this subunit helps assemble the outer membrane channel. The chain is Lipoprotein YghG (yghG) from Escherichia coli (strain K12).